A 331-amino-acid polypeptide reads, in one-letter code: GTP 3',8-cyclase (331 aa).

The region spanning 6–234 (PFNRKIDYLR…PATGKSHDGP (229 aa)) is the Radical SAM core domain. Residue R15 coordinates GTP. 2 residues coordinate [4Fe-4S] cluster: C22 and C26. Y28 lines the S-adenosyl-L-methionine pocket. C29 is a [4Fe-4S] cluster binding site. R66 contributes to the GTP binding site. S-adenosyl-L-methionine is bound at residue G70. S97 is a GTP binding site. Residue S121 coordinates S-adenosyl-L-methionine. K158 is a binding site for GTP. M192 is an S-adenosyl-L-methionine binding site. [4Fe-4S] cluster is bound by residues C258 and C261. 263 to 265 (RVR) serves as a coordination point for GTP. C275 provides a ligand contact to [4Fe-4S] cluster.

This sequence belongs to the radical SAM superfamily. MoaA family. As to quaternary structure, monomer and homodimer. It depends on [4Fe-4S] cluster as a cofactor.

It carries out the reaction GTP + AH2 + S-adenosyl-L-methionine = (8S)-3',8-cyclo-7,8-dihydroguanosine 5'-triphosphate + 5'-deoxyadenosine + L-methionine + A + H(+). It functions in the pathway cofactor biosynthesis; molybdopterin biosynthesis. Functionally, catalyzes the cyclization of GTP to (8S)-3',8-cyclo-7,8-dihydroguanosine 5'-triphosphate. The protein is GTP 3',8-cyclase of Hydrogenovibrio crunogenus (strain DSM 25203 / XCL-2) (Thiomicrospira crunogena).